The chain runs to 323 residues: Annexin A3 (323 aa).

Position 2 is an N-acetylalanine (A2). Annexin repeat units lie at residues 18-89 (FSPS…ALVT), 90-161 (PPAV…TLAD), 173-245 (HLAK…AIVN), and 249-320 (NTPA…KICG). T267 carries the phosphothreonine modification.

This sequence belongs to the annexin family.

Inhibitor of phospholipase A2, also possesses anti-coagulant properties. Also cleaves the cyclic bond of inositol 1,2-cyclic phosphate to form inositol 1-phosphate. The polypeptide is Annexin A3 (ANXA3) (Homo sapiens (Human)).